Reading from the N-terminus, the 173-residue chain is Alpha-crystallin A chain (173 aa).

Met-1 is modified (N-acetylmethionine). Residues 1–63 (MDVTIQHPWF…RTVLDSGVSE (63 aa)) form a required for complex formation with BFSP1 and BFSP2 region. Gln-6 is subject to Deamidated glutamine; partial. Ser-45 is subject to Phosphoserine. Deamidated glutamine; partial is present on Gln-50. In terms of domain architecture, sHSP spans 52–162 (LFRTVLDSGV…GHSERAIPVS (111 aa)). The residue at position 70 (Lys-70) is an N6-acetyllysine. Gln-90 bears the Deamidated glutamine; partial mark. At Lys-99 the chain carries N6-acetyllysine. Zn(2+) is bound at residue His-100. At Asn-101 the chain carries Deamidated asparagine; partial. Zn(2+) is bound by residues Glu-102 and His-107. Ser-122 carries the phosphoserine modification. Position 123 is a deamidated asparagine; partial (Asn-123). The interval 145–173 (KVQSGLDAGHSERAIPVSREEKPSSAPSS) is disordered. A Deamidated glutamine; partial modification is found at Gln-147. Positions 153–167 (GHSERAIPVSREEKP) are enriched in basic and acidic residues. Residue His-154 coordinates Zn(2+). A glycan (O-linked (GlcNAc) serine) is linked at Ser-162.

The protein belongs to the small heat shock protein (HSP20) family. As to quaternary structure, heteromer composed of three CRYAA and one CRYAB subunits. Inter-subunit bridging via zinc ions enhances stability, which is crucial as there is no protein turn over in the lens. Can also form homodimers and homotetramers (dimers of dimers) which serve as the building blocks of homooligomers. Within homooligomers, the zinc-binding motif is created from residues of 3 different molecules. His-100 and Glu-102 from one molecule are ligands of the zinc ion, and His-107 and His-154 residues from additional molecules complete the site with tetrahedral coordination geometry. Part of a complex required for lens intermediate filament formation composed of BFSP1, BFSP2 and CRYAA. In terms of processing, acetylation at Lys-70 may increase chaperone activity. Undergoes age-dependent proteolytical cleavage at the C-terminus.

The protein resides in the cytoplasm. It is found in the nucleus. Its function is as follows. Contributes to the transparency and refractive index of the lens. Acts as a chaperone, preventing aggregation of various proteins under a wide range of stress conditions. Required for the correct formation of lens intermediate filaments as part of a complex composed of BFSP1, BFSP2 and CRYAA. The chain is Alpha-crystallin A chain (CRYAA) from Eulemur fulvus fulvus (Brown lemur).